Here is a 364-residue protein sequence, read N- to C-terminus: sn-glycerol-3-phosphate import ATP-binding protein UgpC (364 aa).

The region spanning 4–235 (VVLRNVRKTY…PATTFVASFI (232 aa)) is the ABC transporter domain. An ATP-binding site is contributed by 37 to 44 (GPSGCGKS).

It belongs to the ABC transporter superfamily. sn-glycerol-3-phosphate importer (TC 3.A.1.1.3) family. In terms of assembly, the complex is composed of two ATP-binding proteins (UgpC), two transmembrane proteins (UgpA and UgpE) and a solute-binding protein (UgpB).

It localises to the cell inner membrane. The catalysed reaction is sn-glycerol 3-phosphate(out) + ATP + H2O = sn-glycerol 3-phosphate(in) + ADP + phosphate + H(+). Its function is as follows. Part of the ABC transporter complex UgpBAEC involved in sn-glycerol-3-phosphate (G3P) import. Responsible for energy coupling to the transport system. This is sn-glycerol-3-phosphate import ATP-binding protein UgpC from Rhodopseudomonas palustris (strain HaA2).